The primary structure comprises 329 residues: 4-hydroxythreonine-4-phosphate dehydrogenase (329 aa).

Residues His136 and Thr137 each coordinate substrate. The a divalent metal cation site is built by His166, His211, and His266. Positions 274, 283, and 292 each coordinate substrate.

This sequence belongs to the PdxA family. In terms of assembly, homodimer. Requires Zn(2+) as cofactor. It depends on Mg(2+) as a cofactor. The cofactor is Co(2+).

The protein localises to the cytoplasm. The catalysed reaction is 4-(phosphooxy)-L-threonine + NAD(+) = 3-amino-2-oxopropyl phosphate + CO2 + NADH. It participates in cofactor biosynthesis; pyridoxine 5'-phosphate biosynthesis; pyridoxine 5'-phosphate from D-erythrose 4-phosphate: step 4/5. Functionally, catalyzes the NAD(P)-dependent oxidation of 4-(phosphooxy)-L-threonine (HTP) into 2-amino-3-oxo-4-(phosphooxy)butyric acid which spontaneously decarboxylates to form 3-amino-2-oxopropyl phosphate (AHAP). The protein is 4-hydroxythreonine-4-phosphate dehydrogenase of Neisseria meningitidis serogroup B (strain ATCC BAA-335 / MC58).